A 160-amino-acid chain; its full sequence is MGVTKKPDLNDPVLRAKLAKGMGHNYYGEPAWPNDLLYIFPVVILGTIACNVGLAVLEPSMIGEPADPFATPLEILPEWYFFPVFQILRTVPNKLLGVLLMVSVPVGLLTVPFLENVNKFQNPFRRPVATTVFLIGTAVALWLGIGATLPIDKSLTLGLF.

A run of 3 helical transmembrane segments spans residues 36–56 (LLYI…GLAV), 95–115 (LLGV…PFLE), and 131–151 (TVFL…TLPI).

This sequence belongs to the cytochrome b family. PetD subfamily. The 4 large subunits of the cytochrome b6-f complex are cytochrome b6, subunit IV (17 kDa polypeptide, petD), cytochrome f and the Rieske protein, while the 4 small subunits are petG, petL, petM and petN. The complex functions as a dimer.

It localises to the plastid. The protein localises to the chloroplast thylakoid membrane. Component of the cytochrome b6-f complex, which mediates electron transfer between photosystem II (PSII) and photosystem I (PSI), cyclic electron flow around PSI, and state transitions. This Daucus carota (Wild carrot) protein is Cytochrome b6-f complex subunit 4.